The chain runs to 207 residues: UPF0328 protein ECU02_1590/ECU04_0060/ECU08_2120 (207 aa).

2 disordered regions span residues 1-154 and 180-207; these read MPRP…HSHT and GRLH…LATL. Basic and acidic residues-rich tracts occupy residues 14–24 and 75–97; these read DHPDFRSESSA and HTEG…ETES. Composition is skewed to polar residues over residues 98–121 and 133–149; these read PKPQ…SQNT and SRPS…QSPH.

It belongs to the UPF0328 family.

The protein is UPF0328 protein ECU02_1590/ECU04_0060/ECU08_2120 of Encephalitozoon cuniculi (strain GB-M1) (Microsporidian parasite).